The sequence spans 483 residues: Regulatory protein ViaA (483 aa).

This sequence belongs to the ViaA family. As to quaternary structure, homodimer. Interacts with RavA.

Its subcellular location is the cytoplasm. Its function is as follows. Component of the RavA-ViaA chaperone complex, which may act on the membrane to optimize the function of some of the respiratory chains. ViaA stimulates the ATPase activity of RavA. This chain is Regulatory protein ViaA, found in Salmonella paratyphi A (strain ATCC 9150 / SARB42).